Here is an 814-residue protein sequence, read N- to C-terminus: Glycogen phosphorylase (814 aa).

Residue K662 is modified to N6-(pyridoxal phosphate)lysine.

The protein belongs to the glycogen phosphorylase family. The cofactor is pyridoxal 5'-phosphate.

It carries out the reaction [(1-&gt;4)-alpha-D-glucosyl](n) + phosphate = [(1-&gt;4)-alpha-D-glucosyl](n-1) + alpha-D-glucose 1-phosphate. Phosphorylase is an important allosteric enzyme in carbohydrate metabolism. Enzymes from different sources differ in their regulatory mechanisms and in their natural substrates. However, all known phosphorylases share catalytic and structural properties. The chain is Glycogen phosphorylase (glgP) from Chlamydia trachomatis serovar D (strain ATCC VR-885 / DSM 19411 / UW-3/Cx).